The chain runs to 1012 residues: AP-2 complex subunit alpha-1 (1012 aa).

4 HEAT repeats span residues 254-289, 354-391, 393-430, and 525-565; these read AMRA…VVKN, DIIK…VSNA, DIVE…DLSW, and PTIP…CIDV. The segment at 652–678 is disordered; it reads STDPESVARSLSHPNGTLSNIDPQTPS. Residues 663 to 675 show a composition bias toward polar residues; the sequence is SHPNGTLSNIDPQ. Residues 742–841 form the GAE domain; sequence ALCLKDSGVL…LDFSYKFGAN (100 aa).

It belongs to the adaptor complexes large subunit family. In terms of assembly, adaptor protein complex 2 (AP-2) is a heterotetramer composed of two large adaptins (alpha-type and beta-type subunits), a medium adaptin (mu-type subunit) and a small adaptin (sigma-type subunit). Binds to EPSIN2.

The protein resides in the membrane. Its subcellular location is the coated pit. In terms of biological role, subunit of the adaptor protein complex 2 (AP-2). Adaptor protein complexes function in protein transport via transport vesicles in different membrane traffic pathways. Adaptor protein complexes are vesicle coat components and appear to be involved in cargo selection and vesicle formation. AP-2 is involved in clathrin-dependent endocytosis in which cargo proteins are incorporated into vesicles surrounded by clathrin (clathrin-coated vesicles, CCVs) which are destined for fusion with the early endosome. The complex binds polyphosphoinositides. The sequence is that of AP-2 complex subunit alpha-1 (ALPHA-ADR) from Arabidopsis thaliana (Mouse-ear cress).